Reading from the N-terminus, the 363-residue chain is Protein LEG1 homolog (363 aa).

A signal peptide spans 1 to 19; it reads MQCVWTLSLLQLVALWANA. Residues Asn79, Asn261, and Asn292 are each glycosylated (N-linked (GlcNAc...) asparagine).

It belongs to the LEG1 family.

It localises to the secreted. May be involved in early liver development. The protein is Protein LEG1 homolog of Oncorhynchus mykiss (Rainbow trout).